We begin with the raw amino-acid sequence, 947 residues long: Protein translocase subunit SecA (947 aa).

Residues Gln85, 103 to 107, and Asp514 contribute to the ATP site; that span reads GEGKT. The segment at 864 to 947 is disordered; the sequence is AAPSLDKGAQ…QAKGGRRRKK (84 aa). Over residues 884–900 the composition is skewed to basic and acidic residues; it reads PEIRAKGLDAPQRRDLH. A compositionally biased stretch (basic residues) spans 934-947; sequence ERRKQAKGGRRRKK.

It belongs to the SecA family. In terms of assembly, monomer and homodimer. Part of the essential Sec protein translocation apparatus which comprises SecA, SecYEG and auxiliary proteins SecDF. Other proteins may also be involved.

It localises to the cell membrane. It is found in the cytoplasm. The catalysed reaction is ATP + H2O + cellular proteinSide 1 = ADP + phosphate + cellular proteinSide 2.. Functionally, part of the Sec protein translocase complex. Interacts with the SecYEG preprotein conducting channel. Has a central role in coupling the hydrolysis of ATP to the transfer of proteins into and across the cell membrane, serving as an ATP-driven molecular motor driving the stepwise translocation of polypeptide chains across the membrane. This chain is Protein translocase subunit SecA, found in Streptomyces lividans.